We begin with the raw amino-acid sequence, 436 residues long: UPF0597 protein YhaM (436 aa).

It belongs to the UPF0597 family.

In Salmonella dublin (strain CT_02021853), this protein is UPF0597 protein YhaM.